The chain runs to 86 residues: High affinity immunoglobulin epsilon receptor subunit gamma (86 aa).

A signal peptide spans 1–18; the sequence is MIPAVVLLLLLLVEQAAA. Residues 19 to 23 lie on the Extracellular side of the membrane; the sequence is LGEPQ. Residues 24-44 traverse the membrane as a helical segment; sequence LCYILDAILFLYGIVLTLLYC. Topologically, residues 45 to 86 are cytoplasmic; it reads RLKIQVRKAAIASYEKSDGVYTGLSTRNQETYETLKHEKPPQ. In terms of domain architecture, ITAM spans 54–82; it reads AIASYEKSDGVYTGLSTRNQETYETLKHE. Phosphotyrosine is present on Tyr-65. Ser-69 bears the Phosphoserine mark. Tyr-76 carries the phosphotyrosine modification. At Thr-78 the chain carries Phosphothreonine.

It belongs to the CD3Z/FCER1G family. As to quaternary structure, igE Fc receptor is a tetramer of an alpha chain, a beta chain, and two disulfide linked gamma chains. Associates with FCGR1A; forms a functional signaling complex. The signaling subunit of immunoglobulin gamma (IgG) Fc receptor complex. As a homodimer or a heterodimer of CD247 and FCER1G, associates with the ligand binding subunit FCGR3A to form a functional receptor complex. Associates with CLEC6A. Interacts with CLEC4E. Interacts (via ITAM domain) with SYK (via SH2 domains); activates SYK, enabling integrin-mediated activation of neutrophils and macrophages. Interacts with CSF2RB and recruits SYK in response to IL3 stimulation; this interaction is direct. Interacts with CD300LH; the interaction may be indirect. Interacts with CD300LD. Interacts with TARM1.

Its subcellular location is the cell membrane. Its function is as follows. Adapter protein containing an immunoreceptor tyrosine-based activation motif (ITAM) that transduces activation signals from various immunoreceptors. As a component of the high-affinity immunoglobulin E (IgE) receptor, mediates allergic inflammatory signaling in mast cells. As a constitutive component of interleukin-3 receptor complex, selectively mediates interleukin 4/IL4 production by basophils priming T-cells toward effector T-helper 2 subset. Associates with pattern recognition receptors CLEC4D and CLEC4E to form a functional signaling complex in myeloid cells. Binding of mycobacterial trehalose 6,6'-dimycolate (TDM) to this receptor complex leads to phosphorylation of ITAM, triggering activation of SYK, CARD9 and NF-kappa-B, consequently driving maturation of antigen-presenting cells and shaping antigen-specific priming of T-cells toward effector T-helper 1 and T-helper 17 cell subtypes. May function cooperatively with other activating receptors. Functionally linked to integrin beta-2/ITGB2-mediated neutrophil activation. Also involved in integrin alpha-2/ITGA2-mediated platelet activation. The chain is High affinity immunoglobulin epsilon receptor subunit gamma (FCER1G) from Macaca fascicularis (Crab-eating macaque).